The sequence spans 184 residues: MKLIVGLGNPGEKYAKTKHNVGYWVLDLLAEKLALSFDQKTENGIYVKQPDFILAKPTTFMNKSGDFVEELIKFYKINTQDLMIIYDDMNFEVGQAAIKTTGSAGGQRGMAHIIEKCKTKEIKRLKIGISRGKNAKEYVLSPFLPKDNAKIKLVIEEAANILIFYLSNSFITTIEKFNANKNKV.

Tyr-14 serves as a coordination point for tRNA. His-19 functions as the Proton acceptor in the catalytic mechanism. Positions 60 and 62 each coordinate tRNA.

This sequence belongs to the PTH family. Monomer.

Its subcellular location is the cytoplasm. The catalysed reaction is an N-acyl-L-alpha-aminoacyl-tRNA + H2O = an N-acyl-L-amino acid + a tRNA + H(+). Functionally, hydrolyzes ribosome-free peptidyl-tRNAs (with 1 or more amino acids incorporated), which drop off the ribosome during protein synthesis, or as a result of ribosome stalling. Catalyzes the release of premature peptidyl moieties from peptidyl-tRNA molecules trapped in stalled 50S ribosomal subunits, and thus maintains levels of free tRNAs and 50S ribosomes. This chain is Peptidyl-tRNA hydrolase, found in Mesomycoplasma hyopneumoniae (strain 7448) (Mycoplasma hyopneumoniae).